We begin with the raw amino-acid sequence, 481 residues long: Dynein axonemal assembly factor 8 (481 aa).

Disordered regions lie at residues 70–91 (DESGTWVTAGRSPSPEPLLVPG), 131–233 (LDTK…EGRP), 306–397 (TWKV…PVAS), and 415–454 (RAFRKGAVPPQLSAKDGPGGQKDQAQEDTGGSQTQRKKHI). Ser83, Ser145, and Ser147 each carry phosphoserine. The span at 144-155 (GSQSPPWSSQGE) shows a compositional bias: polar residues. The span at 163 to 176 (GKLKTEPSDTDFKN) shows a compositional bias: basic and acidic residues. The segment covering 177–188 (SAKRRALRRERR) has biased composition (basic residues). Positions 198–211 (KVTQAAQNPASGDQ) are enriched in polar residues. Basic and acidic residues predominate over residues 310–322 (SADKLQDTEEQVA). Residues 323–336 (RTRSASAESGFQTE) are compositionally biased toward polar residues. Phosphoserine is present on Ser328. 2 stretches are compositionally biased toward basic and acidic residues: residues 337–349 (RVQKRAESRRLKT) and 359–380 (RLTEPSDPQEHQSQESSEHSSS).

Its subcellular location is the dynein axonemal particle. It localises to the cytoplasm. In cyliated cells, dynein axonemal particle-specific protein required for deployment of ODA to the axoneme. Interacts with outer dynein arm (ODA) subunits. This chain is Dynein axonemal assembly factor 8 (Dnaaf8), found in Rattus norvegicus (Rat).